A 617-amino-acid chain; its full sequence is Zinc finger protein 613 (617 aa).

Positions 8 to 78 constitute a KRAB domain; that stretch reads LTLEDVAVEF…ENEIHSQICP (71 aa). C2H2-type zinc fingers lie at residues 204–226, 232–254, 260–282, 288–310, 316–338, 344–366, 372–394, 400–422, 428–450, 456–478, 484–506, and 512–535; these read HVCT…QRVH, HGCS…QRNH, YECT…QKIH, YICS…QRVH, HGCS…QRTH, YECT…QKAH, YICR…QRIH, YICN…RRTH, YVCN…QRFH, FVCT…QRIH, YTCS…RRTH, and YGCS…GMLH.

The protein belongs to the krueppel C2H2-type zinc-finger protein family.

Its subcellular location is the nucleus. May be involved in transcriptional regulation. The chain is Zinc finger protein 613 (ZNF613) from Homo sapiens (Human).